The primary structure comprises 329 residues: MQGSVTEFLKPRLVDIEQVSSTHAKVTLEPLERGFGHTLGNALRRILLSSMPGCAVTEVEIDGVLHEYSTKEGVQEDILEILLNLKGLAVKVQGKDDVILTLNKSGIGPVTAADITHDGDVEIVKPQHVLCHLTDENAAISMRIKVQRGRGYVPASARIHSEEYERPIGRLLVDACYSPVERIAYNVEAARVEQRTDLDKLVIEMETNGTIDPEEAIRRAATILAEQLEAFVDLRDVRQPEVKEEKPEFDPILLRPVDDLELTVRSANCLKAEAIHYIGDLVQRTEVELLKTPNLGKKSLTEIKDVLASRGLSLGMRLENWPPASIADE.

Residues 1–235 form an alpha N-terminal domain (alpha-NTD) region; that stretch reads MQGSVTEFLK…EQLEAFVDLR (235 aa). Positions 249-329 are alpha C-terminal domain (alpha-CTD); the sequence is FDPILLRPVD…NWPPASIADE (81 aa).

This sequence belongs to the RNA polymerase alpha chain family. In terms of assembly, homodimer. The RNAP catalytic core consists of 2 alpha, 1 beta, 1 beta' and 1 omega subunit. When a sigma factor is associated with the core the holoenzyme is formed, which can initiate transcription.

The catalysed reaction is RNA(n) + a ribonucleoside 5'-triphosphate = RNA(n+1) + diphosphate. In terms of biological role, DNA-dependent RNA polymerase catalyzes the transcription of DNA into RNA using the four ribonucleoside triphosphates as substrates. In Sodalis glossinidius (strain morsitans), this protein is DNA-directed RNA polymerase subunit alpha.